Consider the following 219-residue polypeptide: 7-cyano-7-deazaguanine synthase (219 aa).

Residue 10–20 (FSGGQDSTTCL) participates in ATP binding. Zn(2+)-binding residues include C188, C197, C200, and C203.

Belongs to the QueC family. Homodimer. Requires Zn(2+) as cofactor.

The enzyme catalyses 7-carboxy-7-deazaguanine + NH4(+) + ATP = 7-cyano-7-deazaguanine + ADP + phosphate + H2O + H(+). It functions in the pathway purine metabolism; 7-cyano-7-deazaguanine biosynthesis. Functionally, catalyzes the ATP-dependent conversion of 7-carboxy-7-deazaguanine (CDG) to 7-cyano-7-deazaguanine (preQ(0)). The protein is 7-cyano-7-deazaguanine synthase of Clostridium botulinum (strain Loch Maree / Type A3).